A 163-amino-acid polypeptide reads, in one-letter code: Transcriptional repressor NrdR (163 aa).

A zinc finger spans residues 3 to 34; sequence CPFCRHPDSRVVDSRVSDDGSSIRRRRQCPQC. Residues 46 to 136 form the ATP-cone domain; the sequence is LTVIKRSGIG…VYQAFESLDD (91 aa).

Belongs to the NrdR family. Requires Zn(2+) as cofactor.

Negatively regulates transcription of bacterial ribonucleotide reductase nrd genes and operons by binding to NrdR-boxes. This chain is Transcriptional repressor NrdR, found in Renibacterium salmoninarum (strain ATCC 33209 / DSM 20767 / JCM 11484 / NBRC 15589 / NCIMB 2235).